Consider the following 136-residue polypeptide: Classical arabinogalactan protein 26 (136 aa).

The signal sequence occupies residues 1 to 21; sequence MSVSLFTAFTVLSLCLHTSTS. The tract at residues 38-95 is disordered; that stretch reads APSSFSASTPAMSPDTSPLFPTPGSSEMSPSPSESSIMPTIPSSLSPPNPDAVTPDPL. Over residues 40–53 the composition is skewed to polar residues; sequence SSFSASTPAMSPDT. A compositionally biased stretch (low complexity) spans 59–81; it reads TPGSSEMSPSPSESSIMPTIPSS. Residue Ser-108 is the site of GPI-anchor amidated serine attachment. A propeptide spans 109–136 (removed in mature form); the sequence is SSVCLVSSQLSSLLLVLLMLLLAFCSFF.

Belongs to the classical AGP family. In terms of processing, O-glycosylated on the hydroxyproline residues.

It localises to the cell membrane. Proteoglycan that seems to be implicated in diverse developmental roles such as differentiation, cell-cell recognition, embryogenesis and programmed cell death. In Arabidopsis thaliana (Mouse-ear cress), this protein is Classical arabinogalactan protein 26 (AGP26).